An 877-amino-acid polypeptide reads, in one-letter code: Phosphoenolpyruvate carboxylase (877 aa).

Catalysis depends on residues His137 and Lys542.

It belongs to the PEPCase type 1 family. It depends on Mg(2+) as a cofactor.

It carries out the reaction oxaloacetate + phosphate = phosphoenolpyruvate + hydrogencarbonate. In terms of biological role, forms oxaloacetate, a four-carbon dicarboxylic acid source for the tricarboxylic acid cycle. This chain is Phosphoenolpyruvate carboxylase, found in Tolumonas auensis (strain DSM 9187 / NBRC 110442 / TA 4).